A 211-amino-acid polypeptide reads, in one-letter code: Transcriptional regulatory protein LiaR (211 aa).

The region spanning 3-119 (RVLLIDDHEM…EIADAIRAAS (117 aa)) is the Response regulatory domain. A 4-aspartylphosphate modification is found at Asp54. An HTH luxR-type domain is found at 143-208 (NALPHESLTK…QAAVYAHRNH (66 aa)). Residues 167 to 186 (NKEIGEELFITIKTVKTHIT) constitute a DNA-binding region (H-T-H motif).

Post-translationally, phosphorylated by LiaS.

The protein localises to the cytoplasm. Its function is as follows. Member of the two-component regulatory system LiaS/LiaR probably involved in response to a subset of cell wall-active antibiotics that interfere with the lipid II cycle in the cytoplasmic membrane (bacitracin, nisin, ramoplanin and vancomycin). Also seems to be involved in response to cationic antimicrobial peptides and secretion stress. LiaR regulates the transcription of the liaIHGFSR operon. The protein is Transcriptional regulatory protein LiaR (liaR) of Bacillus subtilis (strain 168).